Reading from the N-terminus, the 420-residue chain is MQLLAFGVNHKTASVAIREQITFAPERLPSALTELVNRSGAKEAAILSTCNRTELYCGCAPGQQEAVIEWLRQYHGMEPKILETCLYTHPDHSAVRHLLRVASGLDSMVLGEPQILGQIKAAYSYGLEAGTIGRVLGRLFQHTFYVAKQVRTDTAIGTSPISVAFAAVSLAKQIFGDLESTTAFLIGAGETIELAARHLFTNGVGHIIVANRNLDKAYQLANQFNGYAIPLAEMPKHLSEADIVISSTGSQLPILGKGTVERALRIRKHRPIFMVDIAVPRDIEPEVGELQDIYLYNVDDLQEVVQENLRSRQAAALQAEEIIDTQVEYFMDWVRTQDAVPVICAVRQEADQLRKEALEKARRRLAQGHDPNEVLTMLAHNLTNKLMHVPTRQLRSLGATGDELALQAALKIFDVDHFKA.

Substrate is bound by residues 49 to 52, S107, 112 to 114, and Q118; these read TCNR and EPQ. The Nucleophile role is filled by C50. 187 to 192 contacts NADP(+); sequence GAGETI.

Belongs to the glutamyl-tRNA reductase family. As to quaternary structure, homodimer.

The catalysed reaction is (S)-4-amino-5-oxopentanoate + tRNA(Glu) + NADP(+) = L-glutamyl-tRNA(Glu) + NADPH + H(+). The protein operates within porphyrin-containing compound metabolism; protoporphyrin-IX biosynthesis; 5-aminolevulinate from L-glutamyl-tRNA(Glu): step 1/2. Its function is as follows. Catalyzes the NADPH-dependent reduction of glutamyl-tRNA(Glu) to glutamate 1-semialdehyde (GSA). The sequence is that of Glutamyl-tRNA reductase from Nitrosococcus oceani (strain ATCC 19707 / BCRC 17464 / JCM 30415 / NCIMB 11848 / C-107).